Here is a 195-residue protein sequence, read N- to C-terminus: Anthranilate synthase component 2 (195 aa).

Residues 1-195 (MILIIDNYDS…LKNFLSLSYG (195 aa)) enclose the Glutamine amidotransferase type-1 domain. An L-glutamine-binding site is contributed by 52–54 (GPG). The active-site Nucleophile; for GATase activity is Cys79. L-glutamine-binding positions include Gln83 and 129–130 (SL). Catalysis depends on residues His173 and Glu175.

In terms of assembly, tetramer of two components I and two components II.

The protein localises to the plastid. It localises to the chloroplast. It catalyses the reaction chorismate + L-glutamine = anthranilate + pyruvate + L-glutamate + H(+). Its pathway is amino-acid biosynthesis; L-tryptophan biosynthesis; L-tryptophan from chorismate: step 1/5. The sequence is that of Anthranilate synthase component 2 (trpG) from Cyanidium caldarium (Red alga).